Here is an 89-residue protein sequence, read N- to C-terminus: Large ribosomal subunit protein uL24 (89 aa).

This sequence belongs to the universal ribosomal protein uL24 family. Part of the 50S ribosomal subunit.

One of two assembly initiator proteins, it binds directly to the 5'-end of the 23S rRNA, where it nucleates assembly of the 50S subunit. In terms of biological role, one of the proteins that surrounds the polypeptide exit tunnel on the outside of the subunit. This is Large ribosomal subunit protein uL24 from Oenococcus oeni (strain ATCC BAA-331 / PSU-1).